The following is a 117-amino-acid chain: Early E3 13.3 kDa protein (117 aa).

The chain is Early E3 13.3 kDa protein from Canine adenovirus serotype 1 (strain Glaxo) (CAdV-1).